The chain runs to 140 residues: MIYGVGTDIIEIARVQGVMERTRGRFAEKVLGADELAKYHARKARSERRGLAFLATRFAAKEAFSKAIGLGMRWPMTWRAMELMNLPSGEPTPICHGELAQWIAERGITVRVSVSDERDYAVAFAIAERGGHAAVPENPA.

Residues D8 and E62 each coordinate Mg(2+).

This sequence belongs to the P-Pant transferase superfamily. AcpS family. Mg(2+) is required as a cofactor.

The protein resides in the cytoplasm. It carries out the reaction apo-[ACP] + CoA = holo-[ACP] + adenosine 3',5'-bisphosphate + H(+). Functionally, transfers the 4'-phosphopantetheine moiety from coenzyme A to a Ser of acyl-carrier-protein. The protein is Holo-[acyl-carrier-protein] synthase of Cupriavidus pinatubonensis (strain JMP 134 / LMG 1197) (Cupriavidus necator (strain JMP 134)).